We begin with the raw amino-acid sequence, 102 residues long: Small ribosomal subunit protein uS10 (102 aa).

It belongs to the universal ribosomal protein uS10 family. As to quaternary structure, part of the 30S ribosomal subunit.

Involved in the binding of tRNA to the ribosomes. The polypeptide is Small ribosomal subunit protein uS10 (Sulfurisphaera tokodaii (strain DSM 16993 / JCM 10545 / NBRC 100140 / 7) (Sulfolobus tokodaii)).